The following is a 199-amino-acid chain: Recombination protein RecR (199 aa).

The C4-type zinc finger occupies 58–73 (CSVCNNITDVDPCVFC). A Toprim domain is found at 81 to 176 (RLVCVVEEPT…RLTRIATGVP (96 aa)).

This sequence belongs to the RecR family.

In terms of biological role, may play a role in DNA repair. It seems to be involved in an RecBC-independent recombinational process of DNA repair. It may act with RecF and RecO. This Acidobacterium capsulatum (strain ATCC 51196 / DSM 11244 / BCRC 80197 / JCM 7670 / NBRC 15755 / NCIMB 13165 / 161) protein is Recombination protein RecR.